The sequence spans 76 residues: Conotoxin Cal5a L1 (76 aa).

A signal peptide spans methionine 1–alanine 22. Positions serine 23 to glutamine 42 are excised as a propeptide. The residue at position 50 (proline 50) is a 4-hydroxyproline. Proline 58 carries the post-translational modification 4-hydroxyproline; in form cal5a, and form cal5b. Residue proline 62 is modified to 4-hydroxyproline; in form cal5a, form cal5b, and form cal5c. A 4-hydroxyproline; in form cal5a, form cal5b, form cal5c, and form cal5d modification is found at proline 64.

Contains 2 disulfide bonds that can be either 'C1-C3, C2-C4' or 'C1-C4, C2-C3', since these disulfide connectivities have been observed for conotoxins with cysteine framework V (for examples, see AC P0DQQ7 and AC P81755). Post-translationally, five different peptides have been described after total venom examination by HPLC-MS. Cal5a is the longest. Cal5b-Cal5e are identical in length but are differentially hydroxylated. It is possible that hydroxylation and proteolysis at position 53 are incomplete in some of these peptides. In terms of tissue distribution, expressed by the venom duct.

It is found in the secreted. Functionally, probable neurotoxin with unknown target. Possibly targets ion channels. The chain is Conotoxin Cal5a L1 from Californiconus californicus (California cone).